The sequence spans 143 residues: Transcriptional regulator MraZ (143 aa).

2 SpoVT-AbrB domains span residues 5 to 47 (TYEP…SAEE) and 76 to 119 (ASDE…DAAA).

The protein belongs to the MraZ family. In terms of assembly, forms oligomers.

Its subcellular location is the cytoplasm. It is found in the nucleoid. In Kocuria rhizophila (strain ATCC 9341 / DSM 348 / NBRC 103217 / DC2201), this protein is Transcriptional regulator MraZ.